The following is a 329-amino-acid chain: RNA-binding protein CP33, chloroplastic (329 aa).

The N-terminal 69 residues, 1-69 (MSSAYCSSAV…NIRRHRFFCA (69 aa)), are a transit peptide targeting the chloroplast. Residues 77 to 104 (ADDEIQASVEEEEEVEEEGDEGEEEVEE) are compositionally biased toward acidic residues. 2 disordered regions span residues 77–117 (ADDE…EEGR) and 296–329 (SERE…NVSA). 2 RRM domains span residues 116 to 194 (GRLY…FPEV) and 219 to 297 (HKVY…LASE).

The protein resides in the plastid. Its subcellular location is the chloroplast. In terms of biological role, could be involved in splicing and/or processing of chloroplast RNAs. This is RNA-binding protein CP33, chloroplastic from Arabidopsis thaliana (Mouse-ear cress).